The following is a 59-amino-acid chain: Large ribosomal subunit protein bL32 (59 aa).

The span at 1-16 (MAVPKRKTSPSKRGMR) shows a compositional bias: basic residues. A disordered region spans residues 1-59 (MAVPKRKTSPSKRGMRRSADALKAPTYIEDKNSGELRRPHHIDLKTGMYRGRSVLPPKD). The span at 28-44 (IEDKNSGELRRPHHIDL) shows a compositional bias: basic and acidic residues.

This sequence belongs to the bacterial ribosomal protein bL32 family.

This Bartonella quintana (strain Toulouse) (Rochalimaea quintana) protein is Large ribosomal subunit protein bL32.